We begin with the raw amino-acid sequence, 398 residues long: MKRKIYKLLICATIATSLWAVRTTKVYAWDGKADGTGTHAMIATQGVTILENDLSSNEPEVIRNNLEILKQNMHDLQLGSTYPDYDKNAYDLYQDHFWDPDTDNNFTKDSKWYLSYSIPDTAESQIRKFSALARYEWKRGNYKQATFYLGEAMHYFGDADTPYHAANVTAVDSPGHVKFETFAEDRKDQYKINTTGSKTNDAFYSNILTNEDFNSWSKEFARSFAKTAKDLYYSHANMSCSWDEWDYAAKVALANSQKGTSGYIYRFLHDVSDGKDSSANKNVNELVAYITTGGEKYAGTDDYMYFGIKTKDGQTQEWTMDNPGNDFMTGSQDTYTFKLKDKNLKIDDIQNMWIRKSKYTEFGDDYKPANIKVIANGNVVLNKDINEWISGNSTYNIK.

The signal sequence occupies residues 1–28; that stretch reads MKRKIYKLLICATIATSLWAVRTTKVYA. The Zn(2+) site is built by Trp29, His39, Asp84, His96, His154, Asp158, His164, His176, and Glu180. The region spanning 29 to 278 is the Zn-dependent PLC domain; the sequence is WDGKADGTGT…HDVSDGKDSS (250 aa). The interval 275 to 283 is linker; the sequence is KDSSANKNV. The PLAT domain occupies 284–398; that stretch reads NELVAYITTG…ISGNSTYNIK (115 aa). Ca(2+) is bound by residues Gly299, Thr300, Asp301, Asp321, Asn322, Gly324, Asn325, Asp326, and Asp365.

Requires Ca(2+) as cofactor. Zn(2+) is required as a cofactor.

It is found in the secreted. It catalyses the reaction a 1,2-diacyl-sn-glycero-3-phosphocholine + H2O = phosphocholine + a 1,2-diacyl-sn-glycerol + H(+). In terms of biological role, bacterial hemolysins are exotoxins that attack blood cell membranes and cause cell rupture. Constitutes an essential virulence factor in gas gangrene. Binds to eukaryotic membranes where it hydrolyzes both phosphatidylcholine and sphingomyelin, causing cell rupture. The diacylglycerol produced can activate both the arachidonic acid pathway, leading to modulation of the inflammatory response cascade and thrombosis, and protein kinase C, leading to activation of eukaryotic phospholipases and further membrane damage. The chain is Phospholipase C (plc) from Clostridium perfringens.